The primary structure comprises 298 residues: ATP synthase gamma chain (298 aa).

Belongs to the ATPase gamma chain family. As to quaternary structure, F-type ATPases have 2 components, CF(1) - the catalytic core - and CF(0) - the membrane proton channel. CF(1) has five subunits: alpha(3), beta(3), gamma(1), delta(1), epsilon(1). CF(0) has three main subunits: a, b and c.

The protein localises to the cell inner membrane. In terms of biological role, produces ATP from ADP in the presence of a proton gradient across the membrane. The gamma chain is believed to be important in regulating ATPase activity and the flow of protons through the CF(0) complex. The polypeptide is ATP synthase gamma chain (Albidiferax ferrireducens (strain ATCC BAA-621 / DSM 15236 / T118) (Rhodoferax ferrireducens)).